The chain runs to 275 residues: Phosphate import ATP-binding protein PstB 1 (275 aa).

The ABC transporter domain occupies 22–261; it reads IETRDLSVYY…DRTEKIFNSP (240 aa). An ATP-binding site is contributed by 54 to 61; that stretch reads GPSGCGKS.

It belongs to the ABC transporter superfamily. Phosphate importer (TC 3.A.1.7) family. In terms of assembly, the complex is composed of two ATP-binding proteins (PstB), two transmembrane proteins (PstC and PstA) and a solute-binding protein (PstS).

It is found in the cell inner membrane. It catalyses the reaction phosphate(out) + ATP + H2O = ADP + 2 phosphate(in) + H(+). Part of the ABC transporter complex PstSACB involved in phosphate import. Responsible for energy coupling to the transport system. This chain is Phosphate import ATP-binding protein PstB 1, found in Synechococcus sp. (strain JA-3-3Ab) (Cyanobacteria bacterium Yellowstone A-Prime).